The sequence spans 490 residues: Tegument protein VP16 (490 aa).

Residues 12–35 form a disordered region; that stretch reads MNADGASPPPPRPAGGPKNTPAAP. 4 positions are modified to phosphoserine: Ser18, Ser353, Ser411, and Ser452. The transcriptional activation stretch occupies residues 411–490; the sequence is STAPPTDVSL…DALGIDEYGG (80 aa).

The protein belongs to the herpesviridae tegument protein VP16 protein family. As to quaternary structure, interacts with tegument protein VP22. Interacts with gH (via C-terminus). Interacts with the virion host shutoff protein (vhs). Interacts with VP11/12. Associates with the VP16-induced complex; binding to host HCFC1 activates VP16 for association with the octamer motif-binding host protein POU2F1, to form a multiprotein-DNA complex responsible for activating transcription of the viral immediate early genes. Interacts with host P-TEFb; this interaction recruits P-TEFb to the viral alpha-gene promoters and overcomes transcriptional inhibition by ICP22 and promotes transcription of IE genes.

It is found in the virion tegument. It localises to the host nucleus. In terms of biological role, in the early stage of viral replication, acts as a transcriptional activator of immediate-early (IE) gene products (alpha-genes), which is released by invading virions. Recruits P-TEFb to the viral alpha-gene promoters and overcomes transcriptional inhibition by ICP22 to promote transcription of IE genes. VP16-induced complex represents a regulatory switch: when it is on, it promotes IE-gene expression and thus lytic infection, and when it is off, it limits IE-gene transcription favoring latent infection. Acts as a key activator of lytic infection by initiating the lytic program through the assembly of the transcriptional regulatory VP16-induced complex composed of VP16 and two cellular factors, HCFC1 and POU2F1. This complex recognizes the core motif 'TAATGARAT' in alpha-gene promoters. In the late stage of viral replication, VP16, as a tegument, is involved in viral assembly. Its function is as follows. May play a role in the aggregation of tegument proteins around nucleocapsids during virus morphogenesis. This Human herpesvirus 1 (strain 17) (HHV-1) protein is Tegument protein VP16.